Reading from the N-terminus, the 160-residue chain is Non-secretory ribonuclease (160 aa).

The N-terminal stretch at 1–27 (MVPKLFTSPICLLLLLGLMGVEGSLHA) is a signal peptide. Trp34 carries a C-linked (Man) tryptophan glycan. His42 acts as the Proton acceptor in catalysis. An N-linked (GlcNAc...) asparagine glycan is attached at Asn44. 4 cysteine pairs are disulfide-bonded: Cys50-Cys110, Cys64-Cys122, Cys82-Cys137, and Cys89-Cys98. Tyr60 is subject to 3'-nitrotyrosine. Residue 65–69 (KNQNT) coordinates substrate. N-linked (GlcNAc...) asparagine glycans are attached at residues Asn92, Asn111, Asn118, and Asn138. Residue His155 is the Proton donor of the active site.

It belongs to the pancreatic ribonuclease family. Interacts with and forms a tight 1:1 complex with RNH1. Dimerization of two such complexes may occur.

It localises to the lysosome. The protein localises to the cytoplasmic granule. The enzyme catalyses an [RNA] containing cytidine + H2O = an [RNA]-3'-cytidine-3'-phosphate + a 5'-hydroxy-ribonucleotide-3'-[RNA].. It carries out the reaction an [RNA] containing uridine + H2O = an [RNA]-3'-uridine-3'-phosphate + a 5'-hydroxy-ribonucleotide-3'-[RNA].. This is a non-secretory ribonuclease. It is a pyrimidine specific nuclease with a slight preference for U. Cytotoxin and helminthotoxin. Possesses a wide variety of biological activities. This chain is Non-secretory ribonuclease (RNASE2), found in Chlorocebus aethiops (Green monkey).